The primary structure comprises 199 residues: NAD(P)H dehydrogenase (quinone) (199 aa).

The 187-residue stretch at 4-190 (VLVLYYSAYG…AGARYQGQVI (187 aa)) folds into the Flavodoxin-like domain. FMN is bound by residues 10 to 15 (SAYGHI) and 78 to 80 (TRF). Position 12 (Tyr12) interacts with NAD(+). Residue Trp98 coordinates substrate. FMN contacts are provided by residues 113 to 119 (STATQHG) and His134.

It belongs to the WrbA family. The cofactor is FMN.

The catalysed reaction is a quinone + NADH + H(+) = a quinol + NAD(+). It carries out the reaction a quinone + NADPH + H(+) = a quinol + NADP(+). This chain is NAD(P)H dehydrogenase (quinone), found in Rhodopseudomonas palustris (strain BisA53).